We begin with the raw amino-acid sequence, 191 residues long: 3-isopropylmalate dehydratase small subunit (191 aa).

This sequence belongs to the LeuD family. LeuD type 1 subfamily. As to quaternary structure, heterodimer of LeuC and LeuD.

The catalysed reaction is (2R,3S)-3-isopropylmalate = (2S)-2-isopropylmalate. Its pathway is amino-acid biosynthesis; L-leucine biosynthesis; L-leucine from 3-methyl-2-oxobutanoate: step 2/4. Functionally, catalyzes the isomerization between 2-isopropylmalate and 3-isopropylmalate, via the formation of 2-isopropylmaleate. In Anaeromyxobacter dehalogenans (strain 2CP-1 / ATCC BAA-258), this protein is 3-isopropylmalate dehydratase small subunit.